Here is a 232-residue protein sequence, read N- to C-terminus: 2,3-bisphosphoglycerate-dependent phosphoglycerate mutase (232 aa).

Substrate-binding positions include 10–17, 23–24, Arg62, 89–92, Lys100, 116–117, and 185–186; these read RHGESIWN, TG, ERHY, RR, and GN. His11 functions as the Tele-phosphohistidine intermediate in the catalytic mechanism. Glu89 acts as the Proton donor/acceptor in catalysis.

It belongs to the phosphoglycerate mutase family. BPG-dependent PGAM subfamily. As to quaternary structure, homodimer.

It catalyses the reaction (2R)-2-phosphoglycerate = (2R)-3-phosphoglycerate. It participates in carbohydrate degradation; glycolysis; pyruvate from D-glyceraldehyde 3-phosphate: step 3/5. Catalyzes the interconversion of 2-phosphoglycerate and 3-phosphoglycerate. The polypeptide is 2,3-bisphosphoglycerate-dependent phosphoglycerate mutase (Buchnera aphidicola subsp. Baizongia pistaciae (strain Bp)).